Consider the following 156-residue polypeptide: Transcriptional repressor NrdR (156 aa).

A zinc finger spans residues 3-34; that stretch reads CPFCGSMDTRVLDSRPTLDGAAIRRRRECISC. The region spanning 49–139 is the ATP-cone domain; sequence VLVIKKDGRR…VYRDFREVDQ (91 aa).

The protein belongs to the NrdR family. The cofactor is Zn(2+).

In terms of biological role, negatively regulates transcription of bacterial ribonucleotide reductase nrd genes and operons by binding to NrdR-boxes. The sequence is that of Transcriptional repressor NrdR from Thermotoga neapolitana (strain ATCC 49049 / DSM 4359 / NBRC 107923 / NS-E).